A 368-amino-acid polypeptide reads, in one-letter code: Phosphotransferase IIC component GlvC (368 aa).

At 1–11 (MLSQIQRFGGA) the chain is on the periplasmic side. The 368-residue stretch at 1–368 (MLSQIQRFGG…VGNMGGGLID (368 aa)) folds into the PTS EIIC type-1 domain. A helical membrane pass occupies residues 12–32 (MFTPVLLFPFAGIVVGLAILL). Residues 33 to 59 (QNPMFVGESLTDPNSLFAQIVHIIEEG) are Cytoplasmic-facing. Residues 60–80 (GWTVFRNMPLIFAVGLPIGLA) form a helical membrane-spanning segment. Over 81 to 86 (KQAQGR) the chain is Periplasmic. The helical transmembrane segment at 87-107 (ACLAVMVSFLTWNYFINAMGM) threads the bilayer. Residues 108 to 129 (TWGSYFGVDFTQDAVAGSGLTM) are Cytoplasmic-facing. A helical membrane pass occupies residues 130 to 150 (MAGIKTLDTSIIGAIIISGIV). The Periplasmic portion of the chain corresponds to 151–173 (TALHNRLFDKKLPVFLGIFQGTS). The helical transmembrane segment at 174–194 (YVVIIAFLVMIPCAWLTLLGW) threads the bilayer. The Cytoplasmic segment spans residues 195 to 198 (PKVQ). A helical membrane pass occupies residues 199–221 (MGIESLQAFLRSAGALGVWVYTF). The Periplasmic portion of the chain corresponds to 222–224 (LER). Residues 225-245 (ILIPTGLHHFIYGQFIFGPAA) form a helical membrane-spanning segment. Residues 246–276 (VEGGIQMYWAQHLQEFSLSAEPLKSLFPEGG) lie on the Cytoplasmic side of the membrane. The helical transmembrane segment at 277–297 (FALHGNSKIFGAVGISLAMYF) threads the bilayer. Residues 298–306 (TAAPENRVK) lie on the Periplasmic side of the membrane. The chain crosses the membrane as a helical span at residues 307-327 (VAGLLIPATLTAMLVGITEPL). Residue Glu-328 is a topological domain, cytoplasmic. Residues 329-349 (FTFLFISPLLFAVHAVLAASM) form a helical membrane-spanning segment. Residues 350-368 (STVMYLFGVVGNMGGGLID) lie on the Periplasmic side of the membrane.

It localises to the cell inner membrane. The phosphoenolpyruvate-dependent sugar phosphotransferase system (PTS), a major carbohydrate active -transport system, catalyzes the phosphorylation of incoming sugar substrates concomitant with their translocation across the cell membrane. This operon may be cryptic in wild-type K12 strains. The sequence is that of Phosphotransferase IIC component GlvC from Escherichia coli (strain K12).